The primary structure comprises 169 residues: Fumarase E (169 aa).

The protein belongs to the MtlR/FumE family. Homodimer.

It catalyses the reaction (S)-malate = fumarate + H2O. In terms of biological role, in vitro catalyzes the addition of water to fumarate, forming malate. Cannot catalyze the reverse reaction. Cannot use the cis-isomer maleate as substrate. The polypeptide is Fumarase E (Shigella flexneri).